The following is a 57-amino-acid chain: uncharacterized protein (57 aa).

Residues 10–27 (FGLLWLIIGSEAFHLNAL) traverse the membrane as a helical segment. The stretch at 28-55 (KQDHLERMKQYDAKIRLAKHEFDDTSNE) forms a coiled coil.

It is found in the membrane. This is an uncharacterized protein from Schizosaccharomyces pombe (strain 972 / ATCC 24843) (Fission yeast).